The following is a 170-amino-acid chain: Protein SprT (170 aa).

The 142-residue stretch at 23–164 (QLARQHFSVE…CRQCGDKLKF (142 aa)) folds into the SprT-like domain. His78 serves as a coordination point for Zn(2+). Glu79 is a catalytic residue. His82 provides a ligand contact to Zn(2+).

This sequence belongs to the SprT family. The cofactor is Zn(2+).

Its subcellular location is the cytoplasm. The sequence is that of Protein SprT from Serratia proteamaculans (strain 568).